The primary structure comprises 326 residues: Porin-like protein H (326 aa).

A signal peptide spans Met1–Ala19.

It belongs to the Gram-negative porin family. In terms of assembly, oligomer.

It localises to the cell outer membrane. In terms of biological role, forms pores that allow passive diffusion of small molecules across the outer membrane. The chain is Porin-like protein H (ompH) from Photobacterium profundum (strain SS9).